Consider the following 357-residue polypeptide: Probable RNA methyltransferase Daro_1157 (357 aa).

Glutamate 91 (proton acceptor) is an active-site residue. The Radical SAM core domain maps to 94–320; it reads LLPRDGLCIS…TTVRNSAGQD (227 aa). Cysteine 101 and cysteine 325 form a disulfide bridge. Residues cysteine 108, cysteine 112, and cysteine 115 each coordinate [4Fe-4S] cluster. Residues 153-154, serine 183, 206-208, and asparagine 282 contribute to the S-adenosyl-L-methionine site; these read GE and SLH. The S-methylcysteine intermediate role is filled by cysteine 325.

This sequence belongs to the radical SAM superfamily. RlmN family. It depends on [4Fe-4S] cluster as a cofactor.

It localises to the cytoplasm. This Dechloromonas aromatica (strain RCB) protein is Probable RNA methyltransferase Daro_1157.